Consider the following 260-residue polypeptide: Phosphatidylglycerol--prolipoprotein diacylglyceryl transferase (260 aa).

A run of 4 helical transmembrane segments spans residues 17 to 37 (VVKW…SWIF), 52 to 72 (LTAA…LHVI), 85 to 105 (ILSG…IGLW), and 113 to 133 (FNLG…QAIG). R134 lines the a 1,2-diacyl-sn-glycero-3-phospho-(1'-sn-glycerol) pocket. 3 helical membrane passes run 170 to 190 (VPTQ…SLFI), 198 to 218 (GQLF…IGFV), and 227 to 247 (GLEQ…PFFI).

It belongs to the Lgt family.

It localises to the cell membrane. The enzyme catalyses L-cysteinyl-[prolipoprotein] + a 1,2-diacyl-sn-glycero-3-phospho-(1'-sn-glycerol) = an S-1,2-diacyl-sn-glyceryl-L-cysteinyl-[prolipoprotein] + sn-glycerol 1-phosphate + H(+). It participates in protein modification; lipoprotein biosynthesis (diacylglyceryl transfer). Functionally, catalyzes the transfer of the diacylglyceryl group from phosphatidylglycerol to the sulfhydryl group of the N-terminal cysteine of a prolipoprotein, the first step in the formation of mature lipoproteins. In Dehalococcoides mccartyi (strain ATCC BAA-2266 / KCTC 15142 / 195) (Dehalococcoides ethenogenes (strain 195)), this protein is Phosphatidylglycerol--prolipoprotein diacylglyceryl transferase.